The chain runs to 55 residues: Large ribosomal subunit protein eL40 (55 aa).

Belongs to the eukaryotic ribosomal protein eL40 family.

The polypeptide is Large ribosomal subunit protein eL40 (Ignicoccus hospitalis (strain KIN4/I / DSM 18386 / JCM 14125)).